A 182-amino-acid polypeptide reads, in one-letter code: Ribosome-recycling factor (182 aa).

Belongs to the RRF family.

It is found in the cytoplasm. Functionally, responsible for the release of ribosomes from messenger RNA at the termination of protein biosynthesis. May increase the efficiency of translation by recycling ribosomes from one round of translation to another. The protein is Ribosome-recycling factor of Parasynechococcus marenigrum (strain WH8102).